The chain runs to 392 residues: Histidinol-phosphate aminotransferase (392 aa).

Residues M1–P24 form a disordered region. An N6-(pyridoxal phosphate)lysine modification is found at K236.

Belongs to the class-II pyridoxal-phosphate-dependent aminotransferase family. Histidinol-phosphate aminotransferase subfamily. In terms of assembly, homodimer. It depends on pyridoxal 5'-phosphate as a cofactor.

It catalyses the reaction L-histidinol phosphate + 2-oxoglutarate = 3-(imidazol-4-yl)-2-oxopropyl phosphate + L-glutamate. The protein operates within amino-acid biosynthesis; L-histidine biosynthesis; L-histidine from 5-phospho-alpha-D-ribose 1-diphosphate: step 7/9. The sequence is that of Histidinol-phosphate aminotransferase from Xanthobacter autotrophicus (strain ATCC BAA-1158 / Py2).